Consider the following 311-residue polypeptide: Forkhead box protein R2 (311 aa).

Disordered stretches follow at residues 56-76 (PPEM…PCEP) and 90-171 (LGSQ…QSPE). Basic and acidic residues predominate over residues 115–128 (QKDEGSNCSEDKVV). The segment covering 129–143 (ESLPSSSSEQSPLQK) has biased composition (low complexity). Over residues 153-164 (ELTEEEAEEPDD) the composition is skewed to acidic residues. Residues 192–294 (RPPLNCSHLI…RVLAFAQRER (103 aa)) constitute a DNA-binding region (fork-head).

As to expression, expressed in breast cancer cell lines and primary cancer.

It is found in the nucleus. The polypeptide is Forkhead box protein R2 (FOXR2) (Homo sapiens (Human)).